The chain runs to 148 residues: Large ribosomal subunit protein uL22c (148 aa).

The protein belongs to the universal ribosomal protein uL22 family. In terms of assembly, part of the 50S ribosomal subunit.

Its subcellular location is the plastid. It localises to the chloroplast. This protein binds specifically to 23S rRNA. Its function is as follows. The globular domain of the protein is located near the polypeptide exit tunnel on the outside of the subunit, while an extended beta-hairpin is found that lines the wall of the exit tunnel in the center of the 70S ribosome. The protein is Large ribosomal subunit protein uL22c (rpl22) of Triticum aestivum (Wheat).